We begin with the raw amino-acid sequence, 1271 residues long: Breakpoint cluster region protein (1271 aa).

At Met-1 the chain carries N-acetylmethionine. The interval 1–426 (MVDPVGFAEA…DGEGAFHGDA (426 aa)) is kinase. The stretch at 28–55 (VGDIEQELERCKASIRRLEQEVNQERFR) forms a coiled coil. The interval 67 to 173 (KKSYDRQRWG…GHGQPGADAE (107 aa)) is disordered. Over residues 87 to 105 (ASEPRASASRPQPAPADGA) the composition is skewed to low complexity. Ser-122 carries the phosphoserine modification. The segment covering 123-138 (PGKARPGTARRPGAAA) has biased composition (low complexity). At Ser-139 the chain carries Phosphoserine. Tyr-177 carries the phosphotyrosine; by HCK modification. Residues 185 to 198 (ERGLVKVNDKEVSD) show a composition bias toward basic and acidic residues. Disordered regions lie at residues 185–247 (ERGL…GDYE), 286–392 (GMME…HKRH), and 416–476 (NDGE…SRDA). The interval 197–385 (SDRISSLGSQ…QSFDSSSPPT (189 aa)) is binding to ABL SH2-domain. Residues 199-208 (RISSLGSQAM) are compositionally biased toward polar residues. Phosphoserine is present on residues Ser-202, Ser-215, Ser-222, and Ser-236. At Tyr-246 the chain carries Phosphotyrosine; by FES. Low complexity-rich tracts occupy residues 346–356 (SSGQSSRVSPS) and 369–382 (SPSQ…DSSS). Residues Ser-356, Ser-377, and Ser-382 each carry the phosphoserine modification. At Thr-385 the chain carries Phosphothreonine. Residues 441–451 (DRAEEQRRHQD) are compositionally biased toward basic and acidic residues. Residues Ser-459 and Ser-463 each carry the phosphoserine modification. An Omega-N-methylarginine modification is found at Arg-471. 2 positions are modified to phosphoserine: Ser-473 and Ser-488. The 194-residue stretch at 498 to 691 (MRKWVLSGIL…QNFLSSINEE (194 aa)) folds into the DH domain. Phosphotyrosine is present on Tyr-554. Position 641 is a phosphothreonine (Thr-641). Phosphotyrosine is present on Tyr-644. Thr-693 carries the phosphothreonine modification. The region spanning 708-866 (QLLKDSFMVE…WRENIREQQK (159 aa)) is the PH domain. In terms of domain architecture, C2 spans 893–1020 (HSIPLTINKE…QDRDWQRTVI (128 aa)). Residue Ser-894 is modified to Phosphoserine. The Rho-GAP domain occupies 1054 to 1248 (VKIAVVTKRE…VMSQVQVLLY (195 aa)). At Ser-1264 the chain carries Phosphoserine.

Homotetramer. Interacts with PDZK1. May interact with CCPG1. Interacts with FES/FPS, ABL1, PIK3R1 and GRB2. Interacts with HCK. Interacts with SH2D5. Interacts with DLG4. Post-translationally, autophosphorylated. Phosphorylated by FES/FPS on tyrosine residues, leading to down-regulation of the BCR kinase activity. Phosphorylation at Tyr-177 by HCK is important for interaction with GRB2.

It is found in the postsynaptic density. Its subcellular location is the cell projection. The protein resides in the dendritic spine. The protein localises to the axon. It localises to the synapse. It catalyses the reaction L-seryl-[protein] + ATP = O-phospho-L-seryl-[protein] + ADP + H(+). The enzyme catalyses L-threonyl-[protein] + ATP = O-phospho-L-threonyl-[protein] + ADP + H(+). Protein with a unique structure having two opposing regulatory activities toward small GTP-binding proteins. The C-terminus is a GTPase-activating protein (GAP) domain which stimulates GTP hydrolysis by RAC1, RAC2 and CDC42. Accelerates the intrinsic rate of GTP hydrolysis of RAC1 or CDC42, leading to down-regulation of the active GTP-bound form. The central Dbl homology (DH) domain functions as guanine nucleotide exchange factor (GEF) that modulates the GTPases CDC42, RHOA and RAC1. Promotes the conversion of CDC42, RHOA and RAC1 from the GDP-bound to the GTP-bound form. The amino terminus contains an intrinsic kinase activity. Functions as an important negative regulator of neuronal RAC1 activity. Regulates macrophage functions such as CSF1-directed motility and phagocytosis through the modulation of RAC1 activity. Plays a major role as a RHOA GEF in keratinocytes being involved in focal adhesion formation and keratinocyte differentiation. In Homo sapiens (Human), this protein is Breakpoint cluster region protein.